The sequence spans 156 residues: ATP synthase subunit b 2 (156 aa).

Residues 7-29 form a helical membrane-spanning segment; that stretch reads LLGQAISFAIFVWFCMKYVWPPV.

This sequence belongs to the ATPase B chain family. F-type ATPases have 2 components, F(1) - the catalytic core - and F(0) - the membrane proton channel. F(1) has five subunits: alpha(3), beta(3), gamma(1), delta(1), epsilon(1). F(0) has three main subunits: a(1), b(2) and c(10-14). The alpha and beta chains form an alternating ring which encloses part of the gamma chain. F(1) is attached to F(0) by a central stalk formed by the gamma and epsilon chains, while a peripheral stalk is formed by the delta and b chains.

The protein localises to the cell inner membrane. Its function is as follows. F(1)F(0) ATP synthase produces ATP from ADP in the presence of a proton or sodium gradient. F-type ATPases consist of two structural domains, F(1) containing the extramembraneous catalytic core and F(0) containing the membrane proton channel, linked together by a central stalk and a peripheral stalk. During catalysis, ATP synthesis in the catalytic domain of F(1) is coupled via a rotary mechanism of the central stalk subunits to proton translocation. Component of the F(0) channel, it forms part of the peripheral stalk, linking F(1) to F(0). This chain is ATP synthase subunit b 2, found in Marinomonas sp. (strain MWYL1).